The primary structure comprises 315 residues: Cytochrome c biogenesis protein CcsA (315 aa).

7 helical membrane-spanning segments follow: residues 17–37, 72–92, 101–121, 146–166, 221–241, 255–272, and 282–302; these read LGFA…WAVA, ISNL…AQLF, IVSA…SFVL, VIMC…GVFL, SITA…VWAN, TWAL…HTRI, and AILA…VNLL.

Belongs to the CcmF/CycK/Ccl1/NrfE/CcsA family. In terms of assembly, may interact with ccs1.

The protein resides in the cellular thylakoid membrane. Its function is as follows. Required during biogenesis of c-type cytochromes (cytochrome c6 and cytochrome f) at the step of heme attachment. The protein is Cytochrome c biogenesis protein CcsA of Prochlorococcus marinus (strain NATL2A).